The sequence spans 55 residues: Large ribosomal subunit protein bL33 (55 aa).

Belongs to the bacterial ribosomal protein bL33 family.

In Buchnera aphidicola subsp. Acyrthosiphon pisum (strain APS) (Acyrthosiphon pisum symbiotic bacterium), this protein is Large ribosomal subunit protein bL33 (rpmG).